Reading from the N-terminus, the 394-residue chain is Mannosyl-3-phosphoglycerate synthase (394 aa).

This sequence belongs to the glycosyltransferase 2 family.

It localises to the cytoplasm. It catalyses the reaction (2R)-3-phosphoglycerate + GDP-alpha-D-mannose = 2-O-(alpha-D-mannosyl)-3-phosphoglycerate + GDP + H(+). It participates in carbohydrate biosynthesis; 2-(alpha-D-mannosyl)-D-glycerate biosynthesis; 2-(alpha-D-mannosyl)-D-glycerate from GDP-alpha-D-mannose (MPG route): step 1/2. Its function is as follows. Transfers a mannosyl group from GDP-mannose to phosphoglycerate to form mannosyl-3-phosphoglycerate (MPG). The chain is Mannosyl-3-phosphoglycerate synthase (mngA) from Pyrococcus furiosus (strain ATCC 43587 / DSM 3638 / JCM 8422 / Vc1).